Reading from the N-terminus, the 78-residue chain is MSTIEESVKAIIAEQLGVKKEEVVNNASFVDDLGADSLDTVELVMALEEEFDTEIPDEEAEKITTVQAAIDFIQASQQ.

The Carrier domain maps to 2 to 77 (STIEESVKAI…AAIDFIQASQ (76 aa)). Residue S37 is modified to O-(pantetheine 4'-phosphoryl)serine.

This sequence belongs to the acyl carrier protein (ACP) family. 4'-phosphopantetheine is transferred from CoA to a specific serine of apo-ACP by AcpS. This modification is essential for activity because fatty acids are bound in thioester linkage to the sulfhydryl of the prosthetic group.

It is found in the cytoplasm. Its pathway is lipid metabolism; fatty acid biosynthesis. Functionally, carrier of the growing fatty acid chain in fatty acid biosynthesis. In Sodalis glossinidius (strain morsitans), this protein is Acyl carrier protein.